A 1003-amino-acid polypeptide reads, in one-letter code: Cytosolic carboxypeptidase 3 (1003 aa).

The disordered stretch occupies residues 1–23 (MSEDSEKEDYSDRTISDEDESDE). Residues 299–570 (YPYTYTNLQE…HFCDSLLDYC (272 aa)) enclose the Peptidase M14 domain. H364, E367, and H460 together coordinate Zn(2+). E534 (proton donor/acceptor) is an active-site residue. Disordered stretches follow at residues 642–662 (KQLK…NIRE) and 911–1003 (KSSE…QRDT). Basic and acidic residues predominate over residues 649-662 (ERNSTIERHQNIRE). Basic residues predominate over residues 922 to 934 (PKKRRKYSRVKAT). Positions 963 to 976 (AEGSSQQGTMQTAP) are enriched in polar residues.

The protein belongs to the peptidase M14 family. Zn(2+) is required as a cofactor.

Its subcellular location is the cytoplasm. The protein resides in the cytosol. The catalysed reaction is (L-glutamyl)(n+1)-gamma-L-glutamyl-L-glutamyl-[protein] + H2O = (L-glutamyl)(n)-gamma-L-glutamyl-L-glutamyl-[protein] + L-glutamate. In terms of biological role, metallocarboxypeptidase that mediates deglutamylation of tubulin and non-tubulin target proteins. Catalyzes the removal of polyglutamate side chains present on the gamma-carboxyl group of glutamate residues within the C-terminal tail of tubulin protein. Specifically cleaves tubulin long-side-chains, while it is not able to remove the branching point glutamate. Also catalyzes the removal of polyglutamate residues from the carboxy-terminus of non-tubulin proteins such as MYLK. May catalyze the hydrolysis of aspartate from the carboxy-terminus of target proteins. Does not show detyrosinase or deglycylase activities from the carboxy-terminus of target proteins. The sequence is that of Cytosolic carboxypeptidase 3 (AGBL3) from Bos taurus (Bovine).